We begin with the raw amino-acid sequence, 463 residues long: Argininosuccinate lyase (463 aa).

This sequence belongs to the lyase 1 family. Argininosuccinate lyase subfamily.

The protein resides in the cytoplasm. It carries out the reaction 2-(N(omega)-L-arginino)succinate = fumarate + L-arginine. Its pathway is amino-acid biosynthesis; L-arginine biosynthesis; L-arginine from L-ornithine and carbamoyl phosphate: step 3/3. This chain is Argininosuccinate lyase, found in Streptococcus pneumoniae serotype 2 (strain D39 / NCTC 7466).